Reading from the N-terminus, the 703-residue chain is Lethal(3)malignant brain tumor-like protein 2 (703 aa).

The disordered stretch occupies residues 1 to 70 (MEKPRGTEET…AGELPTSPLH (70 aa)). S13 is modified (phosphoserine). Over residues 15–25 (PMEEEEDDDLE) the composition is skewed to acidic residues. Positions 35 to 49 (SYNSSAGSESSSYLE) are enriched in low complexity. Residues 50–60 (ESSEAENEDRE) show a composition bias toward acidic residues. Phosphoserine is present on S67. Residues 81 to 116 (DGSGSEPAVCEMCGIVGTREAFFSKTKRFCSVSCSR) form an FCS-type zinc finger. 4 residues coordinate Zn(2+): C90, C93, C110, and C114. MBT repeat units follow at residues 179-283 (FDWG…LVPP), 291-391 (TDWK…IKMS), 397-500 (MSHH…LTPP), and 508-604 (FDWE…LQPP). S338 carries the post-translational modification Phosphoserine. Residue K405 forms a Glycyl lysine isopeptide (Lys-Gly) (interchain with G-Cter in SUMO2) linkage. Disordered regions lie at residues 604–649 (PVSA…KKPL) and 672–703 (VKEE…ERDS). Residues 619-634 (TKKKKKQFGKKRKRIP) are compositionally biased toward basic residues. Glycyl lysine isopeptide (Lys-Gly) (interchain with G-Cter in SUMO2) cross-links involve residues K647 and K673. Phosphoserine is present on residues S681, S685, and S687. K698 participates in a covalent cross-link: Glycyl lysine isopeptide (Lys-Gly) (interchain with G-Cter in SUMO1); alternate. Residue K698 forms a Glycyl lysine isopeptide (Lys-Gly) (interchain with G-Cter in SUMO2); alternate linkage.

In terms of assembly, part of the E2F6.com-1 complex in G0 phase composed of E2F6, MGA, MAX, TFDP1, CBX3, BAT8, EUHMTASE1, RING1, RNF2, MBLR, BAT8 and YAF2.

The protein resides in the nucleus. Functionally, putative Polycomb group (PcG) protein. PcG proteins maintain the transcriptionally repressive state of genes, probably via a modification of chromatin, rendering it heritably changed in its expressibility. Its association with a chromatin-remodeling complex suggests that it may contribute to prevent expression of genes that trigger the cell into mitosis. Binds to monomethylated and dimethylated 'Lys-20' on histone H4. Binds histone H3 peptides that are monomethylated or dimethylated on 'Lys-4', 'Lys-9' or 'Lys-27'. The protein is Lethal(3)malignant brain tumor-like protein 2 (L3mbtl2) of Rattus norvegicus (Rat).